Reading from the N-terminus, the 400-residue chain is Argininosuccinate synthase (400 aa).

Residues 10–18 and A38 each bind ATP; that span reads AYSGGVDTS. Y89 contacts L-citrulline. G119 contacts ATP. L-aspartate contacts are provided by T121, N125, and D126. N125 contacts L-citrulline. R129, S177, S186, E262, and Y274 together coordinate L-citrulline.

It belongs to the argininosuccinate synthase family. Type 1 subfamily. As to quaternary structure, homotetramer.

Its subcellular location is the cytoplasm. It catalyses the reaction L-citrulline + L-aspartate + ATP = 2-(N(omega)-L-arginino)succinate + AMP + diphosphate + H(+). Its pathway is amino-acid biosynthesis; L-arginine biosynthesis; L-arginine from L-ornithine and carbamoyl phosphate: step 2/3. This chain is Argininosuccinate synthase, found in Nostoc punctiforme (strain ATCC 29133 / PCC 73102).